Consider the following 809-residue polypeptide: Trimethylamine-N-oxide reductase 2 (809 aa).

A signal peptide (tat-type signal) is located at residues 1 to 31 (MTLTRREFIKHSGIAAGALVVTSAAPLPAWA). Ser176 serves as a coordination point for Mo-bis(molybdopterin guanine dinucleotide).

This sequence belongs to the prokaryotic molybdopterin-containing oxidoreductase family. Requires Mo-bis(molybdopterin guanine dinucleotide) as cofactor. In terms of processing, predicted to be exported by the Tat system. The position of the signal peptide cleavage has not been experimentally proven.

It is found in the periplasm. It carries out the reaction trimethylamine + 2 Fe(III)-[cytochrome c] + H2O = trimethylamine N-oxide + 2 Fe(II)-[cytochrome c] + 3 H(+). Its function is as follows. Reduces trimethylamine-N-oxide (TMAO) into trimethylamine; an anaerobic reaction coupled to energy-yielding reactions. Can also reduce other N- and S-oxide compounds such as 4-methylmorpholine-N-oxide and biotin sulfoxide (BSO), but with a lower catalytic efficiency. The polypeptide is Trimethylamine-N-oxide reductase 2 (torZ) (Escherichia coli O157:H7).